Consider the following 883-residue polypeptide: Phosphoenolpyruvate carboxylase (883 aa).

Catalysis depends on residues His138 and Lys546.

Belongs to the PEPCase type 1 family. It depends on Mg(2+) as a cofactor.

The catalysed reaction is oxaloacetate + phosphate = phosphoenolpyruvate + hydrogencarbonate. Functionally, forms oxaloacetate, a four-carbon dicarboxylic acid source for the tricarboxylic acid cycle. This Klebsiella pneumoniae (strain 342) protein is Phosphoenolpyruvate carboxylase.